Here is a 317-residue protein sequence, read N- to C-terminus: Endochitinase 3 (317 aa).

The N-terminal stretch at 1 to 19 (MFVRNALVVTGLLAALTQA) is a signal peptide. N-linked (GlcNAc...) asparagine glycans are attached at residues Asn-25, Asn-49, and Asn-169. In terms of domain architecture, GH18 spans 29-317 (HKLTVYWGAE…NYQKEIKANL (289 aa)). Glu-170 acts as the Proton donor in catalysis. The N-linked (GlcNAc...) asparagine glycan is linked to Asn-245.

It belongs to the glycosyl hydrolase 18 family. Chitinase class III subfamily.

The protein resides in the secreted. The catalysed reaction is Random endo-hydrolysis of N-acetyl-beta-D-glucosaminide (1-&gt;4)-beta-linkages in chitin and chitodextrins.. In terms of biological role, secreted chitinase involved in the degradation of chitin, a component of the cell walls of fungi and exoskeletal elements of some animals (including worms and arthropods). Participates in the infection process and directly acts in the penetration process of the host cuticle. Involved in heat-shock adaptation. The polypeptide is Endochitinase 3 (chi3) (Metarhizium robertsii (strain ARSEF 23 / ATCC MYA-3075) (Metarhizium anisopliae (strain ARSEF 23))).